The sequence spans 140 residues: Cystatin-like 1 (140 aa).

Positions 1-23 (MEMKARGLRIPLLLLLVTVVVMA) are cleaved as a signal peptide. Positions 32 to 126 (GGFKEKAMSK…CKSLIYSVPW (95 aa)) constitute a Cystatin domain. N45 is a glycosylation site (N-linked (GlcNAc...) asparagine). 2 cysteine pairs are disulfide-bonded: C94/C104 and C117/C137.

Belongs to the cystatin family. In terms of tissue distribution, highly expressed in testis where it localizes to spermatogonium, spermatocyes and round spermatids. Not detected in spermatozoa. Also detected in epididymis, cerebrum and pituitary.

It localises to the secreted. In Mus musculus (Mouse), this protein is Cystatin-like 1.